A 351-amino-acid polypeptide reads, in one-letter code: Beta-hexosaminidase (351 aa).

Substrate-binding positions include Asp-62, Arg-70, Arg-134, and 164–165; that span reads KH. The Proton donor/acceptor role is filled by His-177. The Nucleophile role is filled by Asp-249.

Belongs to the glycosyl hydrolase 3 family. NagZ subfamily.

The protein resides in the cytoplasm. It carries out the reaction Hydrolysis of terminal non-reducing N-acetyl-D-hexosamine residues in N-acetyl-beta-D-hexosaminides.. It participates in cell wall biogenesis; peptidoglycan recycling. Its function is as follows. Plays a role in peptidoglycan recycling by cleaving the terminal beta-1,4-linked N-acetylglucosamine (GlcNAc) from peptide-linked peptidoglycan fragments, giving rise to free GlcNAc, anhydro-N-acetylmuramic acid and anhydro-N-acetylmuramic acid-linked peptides. In Histophilus somni (strain 129Pt) (Haemophilus somnus), this protein is Beta-hexosaminidase.